Consider the following 246-residue polypeptide: tRNA pseudouridine synthase A (246 aa).

Asp52 functions as the Nucleophile in the catalytic mechanism. A substrate-binding site is contributed by Tyr111.

The protein belongs to the tRNA pseudouridine synthase TruA family. As to quaternary structure, homodimer.

The enzyme catalyses uridine(38/39/40) in tRNA = pseudouridine(38/39/40) in tRNA. In terms of biological role, formation of pseudouridine at positions 38, 39 and 40 in the anticodon stem and loop of transfer RNAs. The protein is tRNA pseudouridine synthase A of Ehrlichia ruminantium (strain Welgevonden).